Here is a 561-residue protein sequence, read N- to C-terminus: Septation ring formation regulator EzrA (561 aa).

Topologically, residues methionine 1 to isoleucine 3 are extracellular. A helical transmembrane segment spans residues valine 4 to arginine 22. The Cytoplasmic segment spans residues arginine 23–glycine 561. Coiled coils occupy residues arginine 98–leucine 130, alanine 166–lysine 214, and phenylalanine 251–aspartate 465.

It belongs to the EzrA family.

It localises to the cell membrane. In terms of biological role, negative regulator of FtsZ ring formation; modulates the frequency and position of FtsZ ring formation. Inhibits FtsZ ring formation at polar sites. Interacts either with FtsZ or with one of its binding partners to promote depolymerization. The sequence is that of Septation ring formation regulator EzrA from Halalkalibacterium halodurans (strain ATCC BAA-125 / DSM 18197 / FERM 7344 / JCM 9153 / C-125) (Bacillus halodurans).